We begin with the raw amino-acid sequence, 720 residues long: 1-deoxy-D-xylulose-5-phosphate synthase 1, chloroplastic (720 aa).

A chloroplast-targeting transit peptide spans 1 to 51; the sequence is MALTTFSISRGGFVGALPQEGHFAPAAAELSLHKLQSRPHKARRRSSSSIS. Basic residues predominate over residues 35-46; it reads LQSRPHKARRRS. The segment at 35–74 is disordered; it reads LQSRPHKARRRSSSSISASLSTEREAAEYHSQRPPTPLLD. The span at 56–65 shows a compositional bias: basic and acidic residues; sequence TEREAAEYHS. Thiamine diphosphate contacts are provided by residues histidine 142 and 183–185; that span reads GHS. Residue aspartate 214 participates in Mg(2+) binding. Thiamine diphosphate-binding positions include 215-216, asparagine 243, tyrosine 364, and glutamate 446; that span reads GA. Asparagine 243 lines the Mg(2+) pocket.

It belongs to the transketolase family. DXPS subfamily. In terms of assembly, homodimer. The cofactor is Mg(2+). Thiamine diphosphate is required as a cofactor.

It localises to the plastid. Its subcellular location is the chloroplast stroma. It catalyses the reaction D-glyceraldehyde 3-phosphate + pyruvate + H(+) = 1-deoxy-D-xylulose 5-phosphate + CO2. Its pathway is metabolic intermediate biosynthesis; 1-deoxy-D-xylulose 5-phosphate biosynthesis; 1-deoxy-D-xylulose 5-phosphate from D-glyceraldehyde 3-phosphate and pyruvate: step 1/1. Catalyzes the acyloin condensation reaction between C atoms 2 and 3 of pyruvate and glyceraldehyde 3-phosphate to yield 1-deoxy-D-xylulose-5-phosphate (DXP). Is a limiting enzyme for plastidic isoprenoid biosynthesis and essential for chloroplast development. In Oryza sativa subsp. japonica (Rice), this protein is 1-deoxy-D-xylulose-5-phosphate synthase 1, chloroplastic (CLA1).